Here is a 200-residue protein sequence, read N- to C-terminus: GTP cyclohydrolase-2 (200 aa).

50 to 54 (RVHSE) contacts GTP. Zn(2+) is bound by residues Cys55, Cys66, and Cys68. GTP is bound by residues Gln71, 93-95 (EGR), and Thr115. Catalysis depends on Asp127, which acts as the Proton acceptor. Arg129 acts as the Nucleophile in catalysis. GTP-binding residues include Thr150 and Lys155.

This sequence belongs to the GTP cyclohydrolase II family. The cofactor is Zn(2+).

The catalysed reaction is GTP + 4 H2O = 2,5-diamino-6-hydroxy-4-(5-phosphoribosylamino)-pyrimidine + formate + 2 phosphate + 3 H(+). The protein operates within cofactor biosynthesis; riboflavin biosynthesis; 5-amino-6-(D-ribitylamino)uracil from GTP: step 1/4. Functionally, catalyzes the conversion of GTP to 2,5-diamino-6-ribosylamino-4(3H)-pyrimidinone 5'-phosphate (DARP), formate and pyrophosphate. The protein is GTP cyclohydrolase-2 of Acinetobacter baumannii (strain AB0057).